A 92-amino-acid chain; its full sequence is UPF0728 protein (92 aa).

Belongs to the UPF0728 family.

The sequence is that of UPF0728 protein from Branchiostoma floridae (Florida lancelet).